We begin with the raw amino-acid sequence, 243 residues long: Clathrin light chain A (243 aa).

At M1 the chain carries Blocked amino end (Met). Disordered regions lie at residues 1-22 and 49-87; these read MAEL…GVAG and ILDG…GPTD. Residues 10-20 are compositionally biased toward gly residues; it reads PAGGPALGNGV. The tract at residues 95–157 is involved in binding clathrin heavy chain; that stretch reads VDRLQSEPES…QLQKTKANNR (63 aa). Phosphoserine occurs at positions 100 and 201. K218 is subject to N6-acetyllysine. S231 bears the Phosphoserine mark. N6-acetyllysine is present on K237.

This sequence belongs to the clathrin light chain family. In terms of assembly, clathrin coats are formed from molecules containing 3 heavy chains and 3 light chains. Interacts with CALY; the interaction stimulates clathrin self-assembly and clathrin-mediated endocytosis. Interacts with CKAP5 and TACC3 forming the TACC3/ch-TOG/clathrin complex located at spindle inter-microtubules bridges; the complex implicates clathrin triskelions.

Its subcellular location is the cytoplasmic vesicle membrane. It localises to the membrane. The protein localises to the coated pit. It is found in the cytoplasm. The protein resides in the cytoskeleton. Its subcellular location is the spindle. Its function is as follows. Clathrin is the major protein of the polyhedral coat of coated pits and vesicles. Acts as a component of the TACC3/ch-TOG/clathrin complex proposed to contribute to stabilization of kinetochore fibers of the mitotic spindle by acting as inter-microtubule bridge. The protein is Clathrin light chain A (CLTA) of Bos taurus (Bovine).